The chain runs to 480 residues: Pre-glycoprotein polyprotein GP complex (480 aa).

The N-myristoyl glycine; by host moiety is linked to residue Gly2. The Extracellular segment spans residues 2 to 17 (GQLVSFFQEIPVFFQE). The chain crosses the membrane as a helical span at residues 18–33 (ALNIALAVVTLLAIVK). Over 34–58 (GVLNLWKSGLFQLLMFLILAGRSCS) the chain is Cytoplasmic. Cys57 is a Zn(2+) binding site. Topologically, residues 59-419 (FRIGYHTSFE…QGRTPLTLVD (361 aa)) are extracellular. Cystine bridges form between Cys85–Cys221, Cys266–Cys279, Cys288–Cys297, and Cys351–Cys372. N-linked (GlcNAc...) asparagine; by host glycosylation is found at Asn88, Asn174, and Asn214. Residues Asn352, Asn360, Asn377, and Asn382 are each glycosylated (N-linked (GlcNAc...) asparagine; by host). A helical membrane pass occupies residues 420 to 440 (LCFWSAVFYTTTLFLHLVGFP). Over 441–480 (THRHISGEPCPLPHRLNRHGACNCGRFKRLKKPLVWYKHH) the chain is Cytoplasmic. Zn(2+) is bound by residues His442, His444, Cys450, His454, Cys462, Cys464, and His480.

Belongs to the arenaviridae GPC protein family. As to quaternary structure, interacts with glycoprotein G2. Part of the GP complex (GP-C) together with glycoprotein G1 and glycoprotein G2. The GP-complex interacts with protein Z, which interacts with ribonucleocapsid; these interactions may induce virion budding. In terms of assembly, homotrimer; disulfide-linked. In pre-fusion state, G1 homotrimers bind G2 homotrimers via ionic interactions. Part of the GP complex (GP-C) together with glycoprotein G2 and the stable signal peptide. The GP-complex interacts with protein Z, which interacts with ribonucleocapsid; these interactions may induce virion budding. Homotrimer. Interacts with the stable signal peptide. In pre-fusion state, G2 homotrimers bind G1 homotrimers via ionic interactions. Part of the GP complex (GP-C) together with glycoprotein G1 and the stable signal peptide. Acidification in the endosome triggers rearrangements, which ultimately leads to a 6 helix bundle formed by the two heptad repeat domains (HR1 and HR2) in post-fusion state. The GP-complex interacts with protein Z, which interacts with ribonucleocapsid; these interactions may induce virion budding. Specific enzymatic cleavages in vivo yield mature proteins. GP-C polyprotein is cleaved in the endoplasmic reticulum by the host protease MBTPS1. Only cleaved glycoprotein is incorporated into virions. In terms of processing, the SSP remains stably associated with the GP complex following cleavage by signal peptidase and plays crucial roles in the trafficking of GP through the secretory pathway. Post-translationally, myristoylation is necessary for GP2-mediated fusion activity.

Its subcellular location is the virion membrane. The protein localises to the host endoplasmic reticulum membrane. It is found in the host Golgi apparatus membrane. It localises to the host cell membrane. In terms of biological role, functions as a cleaved signal peptide that is retained as the third component of the GP complex (GP-C). Helps to stabilize the spike complex in its native conformation. The SSP is required for efficient glycoprotein expression, post-translational maturation cleavage of G1 and G2, glycoprotein transport to the cell surface plasma membrane, formation of infectious virus particles, and acid pH-dependent glycoprotein-mediated cell fusion. Functionally, forms the virion spikes together with glycoprotein G2. The glycoprotein spike trimers are connected to the underlying matrix. Interacts with the host receptor leading to virus endocytosis. Forms the virion spikes together with glycoprotein G1. The glycoprotein spike trimers are connected to the underlying matrix. Class I viral fusion protein that directs fusion of viral and host endosomal membranes, leading to delivery of the nucleocapsid into the cytoplasm. Membrane fusion is mediated by irreversible conformational changes induced by acidification. In Cupixi mammarenavirus (isolate Rat/Brasil/BeAn 119303/1970) (CPXV), this protein is Pre-glycoprotein polyprotein GP complex.